A 218-amino-acid polypeptide reads, in one-letter code: Small ribosomal subunit protein uS3c (218 aa).

Residues 47-118 (VQKNIRISSG…KLNIAITRIT (72 aa)) enclose the KH type-2 domain.

Belongs to the universal ribosomal protein uS3 family. In terms of assembly, part of the 30S ribosomal subunit.

Its subcellular location is the plastid. The protein resides in the chloroplast. The protein is Small ribosomal subunit protein uS3c (rps3) of Vitis vinifera (Grape).